Reading from the N-terminus, the 1088-residue chain is uncharacterized protein (1088 aa).

Position 299 is a phosphoserine (Ser299). The segment at Pro954–Lys980 is disordered. The span at Ser956 to Glu968 shows a compositional bias: low complexity. At Ser984 the chain carries Phosphoserine. Position 1013 is a phosphothreonine (Thr1013). The tract at residues Met1063–Ser1088 is disordered. Position 1081 is a phosphoserine (Ser1081).

This is an uncharacterized protein from Saccharomyces cerevisiae (strain ATCC 204508 / S288c) (Baker's yeast).